Consider the following 466-residue polypeptide: Muscarinic acetylcholine receptor M2 (466 aa).

At M1–E22 the chain is on the extracellular side. Residues N2, N3, N6, and N9 are each glycosylated (N-linked (GlcNAc...) asparagine). The chain crosses the membrane as a helical span at residues V23–M45. Over V46–N59 the chain is Cytoplasmic. A helical transmembrane segment spans residues Y60–Y80. Residues T81 to D97 lie on the Extracellular side of the membrane. The cysteines at positions 96 and 176 are disulfide-linked. The chain crosses the membrane as a helical span at residues L98 to F119. Residues D120 to Y122 carry the Important for signaling motif. The Cytoplasmic portion of the chain corresponds to D120–M139. Residues A140–W162 traverse the membrane as a helical segment. Topologically, residues Q163 to A184 are extracellular. A helical transmembrane segment spans residues A185 to I209. Residues S210 to R387 are Cytoplasmic-facing. A disordered region spans residues K218–D355. Position 232 is a phosphoserine (S232). Positions G254 to V270 are enriched in basic and acidic residues. Composition is skewed to polar residues over residues N284 to A293, D304 to G313, and S334 to N353. The chain crosses the membrane as a helical span at residues T388 to N410. Topologically, residues T411 to P418 are extracellular. C413 and C416 form a disulfide bridge. A helical membrane pass occupies residues N419–L442. The Important for signaling signature appears at N436 to Y440. Over C443 to R466 the chain is Cytoplasmic. Phosphothreonine occurs at positions 446, 450, and 465.

This sequence belongs to the G-protein coupled receptor 1 family. Muscarinic acetylcholine receptor subfamily. CHRM2 sub-subfamily. Interacts with ARRB1 and ARRB2. Interacts with RACK1; the interaction regulates CHRM2 internalization. Phosphorylated in response to agonist treatment.

It is found in the cell membrane. The protein resides in the postsynaptic cell membrane. Its function is as follows. The muscarinic acetylcholine receptor mediates various cellular responses, including inhibition of adenylate cyclase, breakdown of phosphoinositides and modulation of potassium channels through the action of G proteins. Primary transducing effect is adenylate cyclase inhibition. Signaling promotes phospholipase C activity, leading to the release of inositol trisphosphate (IP3); this then triggers calcium ion release into the cytosol. The chain is Muscarinic acetylcholine receptor M2 (CHRM2) from Homo sapiens (Human).